The primary structure comprises 670 residues: Methionine--tRNA ligase (670 aa).

The 'HIGH' region signature appears at 14 to 24 (PYANGHLHLGH). Zn(2+) contacts are provided by Cys-145, Cys-148, Cys-158, and Cys-161. Positions 330 to 334 (KMSKS) match the 'KMSKS' region motif. Residue Lys-333 coordinates ATP. Positions 570-670 (DFAKVDLRIA…AGALPGMKVK (101 aa)) constitute a tRNA-binding domain.

This sequence belongs to the class-I aminoacyl-tRNA synthetase family. MetG type 1 subfamily. Homodimer. Zn(2+) serves as cofactor.

Its subcellular location is the cytoplasm. The enzyme catalyses tRNA(Met) + L-methionine + ATP = L-methionyl-tRNA(Met) + AMP + diphosphate. Is required not only for elongation of protein synthesis but also for the initiation of all mRNA translation through initiator tRNA(fMet) aminoacylation. This chain is Methionine--tRNA ligase, found in Legionella pneumophila subsp. pneumophila (strain Philadelphia 1 / ATCC 33152 / DSM 7513).